The sequence spans 296 residues: Glutamate 5-kinase (296 aa).

K15 provides a ligand contact to ATP. Substrate contacts are provided by S55, D159, and N186. ATP contacts are provided by residues 206–207 (SD) and 248–254 (TGGIATK).

Belongs to the glutamate 5-kinase family.

It localises to the cytoplasm. The catalysed reaction is L-glutamate + ATP = L-glutamyl 5-phosphate + ADP. Its pathway is amino-acid biosynthesis; L-proline biosynthesis; L-glutamate 5-semialdehyde from L-glutamate: step 1/2. Catalyzes the transfer of a phosphate group to glutamate to form L-glutamate 5-phosphate. This Treponema pallidum (strain Nichols) protein is Glutamate 5-kinase.